Here is a 290-residue protein sequence, read N- to C-terminus: 4-hydroxy-tetrahydrodipicolinate synthase (290 aa).

Threonine 44 lines the pyruvate pocket. The active-site Proton donor/acceptor is the tyrosine 132. Lysine 160 serves as the catalytic Schiff-base intermediate with substrate. Residue isoleucine 202 coordinates pyruvate.

It belongs to the DapA family. As to quaternary structure, homotetramer; dimer of dimers.

It localises to the cytoplasm. The catalysed reaction is L-aspartate 4-semialdehyde + pyruvate = (2S,4S)-4-hydroxy-2,3,4,5-tetrahydrodipicolinate + H2O + H(+). It functions in the pathway amino-acid biosynthesis; L-lysine biosynthesis via DAP pathway; (S)-tetrahydrodipicolinate from L-aspartate: step 3/4. In terms of biological role, catalyzes the condensation of (S)-aspartate-beta-semialdehyde [(S)-ASA] and pyruvate to 4-hydroxy-tetrahydrodipicolinate (HTPA). This chain is 4-hydroxy-tetrahydrodipicolinate synthase, found in Trichlorobacter lovleyi (strain ATCC BAA-1151 / DSM 17278 / SZ) (Geobacter lovleyi).